The primary structure comprises 402 residues: Propionate kinase (402 aa).

Positions 11 and 18 each coordinate ATP. Asn11 provides a ligand contact to Mg(2+). Residue Arg86 coordinates substrate. The active-site Proton donor/acceptor is Asp143. ATP-binding positions include His175, 203 to 207 (HLGNG), 278 to 280 (DLR), and 326 to 330 (GIGEN).

This sequence belongs to the acetokinase family. TdcD subfamily. In terms of assembly, homodimer. Requires Mg(2+) as cofactor.

The catalysed reaction is propanoate + ATP = propanoyl phosphate + ADP. The protein operates within amino-acid degradation; L-threonine degradation via propanoate pathway; propanoate from L-threonine: step 4/4. Catalyzes the conversion of propionyl phosphate and ADP to propionate and ATP. This is Propionate kinase from Edwardsiella piscicida.